The primary structure comprises 257 residues: High affinity immunoglobulin epsilon receptor subunit alpha (257 aa).

Residues 1–25 (MAPAMESPTLLCVALLFFAPDGVLA) form the signal peptide. Over 26–205 (VPQKPKVSLN…KAPREKYWLQ (180 aa)) the chain is Extracellular. 2 Ig-like domains span residues 30-110 (PKVS…EVFS) and 111-193 (DWLL…LNIT). Residues Asn46, Asn67, Asn75, Asn99, Asn160, Asn165, and Asn191 are each glycosylated (N-linked (GlcNAc...) asparagine). An intrachain disulfide couples Cys51 to Cys93. Cysteines 132 and 176 form a disulfide. A helical transmembrane segment spans residues 206–224 (FFIPLLVVILFAVDTGLFI). Residues 225–257 (STQQQVTFLLKIKRTRKGFRLLNPHPKPNPKNN) lie on the Cytoplasmic side of the membrane.

Tetramer of an alpha chain, a beta chain, and two disulfide linked gamma chains. Interacts with IGHE (via CH3 region). In terms of tissue distribution, expressed in eosinophils.

It localises to the cell membrane. Functionally, high-affinity receptor for immunoglobulin epsilon/IgE. Mediates IgE effector functions in myeloid cells. Upon IgE binding and antigen/allergen cross-linking initiates signaling pathways that lead to myeloid cell activation and differentiation. On mast cells, basophils and eosinophils stimulates the secretion of vasoactive amines, lipid mediators and cytokines that contribute to inflammatory response, tissue remodeling and cytotoxicity against microbes. Triggers the immediate hypersensitivity response to allergens as a host defense mechanism against helminth parasites, pathogenic bacteria and venom toxicity. When dysregulated, it can elicit harmful life-threatening allergic and anaphylactic reactions. In Homo sapiens (Human), this protein is High affinity immunoglobulin epsilon receptor subunit alpha (FCER1A).